A 153-amino-acid polypeptide reads, in one-letter code: Endoribonuclease YbeY (153 aa).

Zn(2+) is bound by residues His118, His122, and His128.

It belongs to the endoribonuclease YbeY family. The cofactor is Zn(2+).

It is found in the cytoplasm. Single strand-specific metallo-endoribonuclease involved in late-stage 70S ribosome quality control and in maturation of the 3' terminus of the 16S rRNA. This Clostridioides difficile (strain 630) (Peptoclostridium difficile) protein is Endoribonuclease YbeY.